Reading from the N-terminus, the 384-residue chain is Spermidine/putrescine import ATP-binding protein PotA (384 aa).

The 233-residue stretch at 6-238 (IAFQNVSKVF…PINHFVATFI (233 aa)) folds into the ABC transporter domain. ATP is bound at residue 40–47 (GASGSGKS).

This sequence belongs to the ABC transporter superfamily. Spermidine/putrescine importer (TC 3.A.1.11.1) family. In terms of assembly, the complex is composed of two ATP-binding proteins (PotA), two transmembrane proteins (PotB and PotC) and a solute-binding protein (PotD).

The protein localises to the cell membrane. It carries out the reaction ATP + H2O + polyamine-[polyamine-binding protein]Side 1 = ADP + phosphate + polyamineSide 2 + [polyamine-binding protein]Side 1.. Part of the ABC transporter complex PotABCD involved in spermidine/putrescine import. Responsible for energy coupling to the transport system. The sequence is that of Spermidine/putrescine import ATP-binding protein PotA from Streptococcus thermophilus (strain ATCC BAA-250 / LMG 18311).